A 1020-amino-acid chain; its full sequence is Nucleotide-binding oligomerization domain-containing protein 2 (1020 aa).

2 CARD domains span residues 6–104 (CDMC…GSWD) and 106–200 (HSLH…AECQ). An ATG16L1-binding motif motif is present at residues 43–57 (WDVLSREDYEGLSLP). ADP-binding residues include Thr219, Tyr232, Thr233, Gly282, Ser283, Gly284, Lys285, Ser286, and Thr287. The required for CARD9 binding stretch occupies residues 221 to 254 (DGSENLCLEDIYTENILELQTEVGTAGALQKSPA). The region spanning 273 to 600 (DTILVVGEAG…AAFYLAVSAD (328 aa)) is the NACHT domain. Cys375 is lipidated: S-palmitoyl cysteine. His583 contacts ADP. LRR repeat units lie at residues 685–709 (ARARSCLAHSLREHFHSIPPAVPGE), 726–749 (LYEMQEEQLAQEAVRRLDIGHLKL), 766–792 (LQHLQRPVALQLDYNSVGDVGVEQLRP), 794–817 (LGVCTALYLRDNNISDRGARTLVE), 822–845 (CEQLQKLALFNNKLTDACACSMAK), 850–873 (KQNFLSLRVGNNHITAAGAEVLAQ), 906–929 (HQNLKWLSLVGNNIGSMGAEALAL), 934–962 (NKSLEELCLEENHICDEGVYSLAEGLKRN), 963–985 (STLKFLKLSNNGITYRGAEALLQ), and 1005–1019 (LEEIQTLSSRDARLL).

Belongs to the NOD1-NOD2 family. Homooligomer: homooligomerizes following muramyl dipeptide (MDP)-binding, promoting RIPK2 recruitment. Interacts (via CARD domain) with RIPK2 (via CARD domain). Following RIPK2 recruitment, RIPK2 homooligomerizes via its CARD domain and forms long filaments named RIPosomes. Interacts (via CARD domain) with ubiquitin; inhibiting interaction with RIPK2. Component of a signaling complex consisting of ARHGEF2, NOD2 and RIPK2. Interacts with ANKRD17 (via N-terminus). Interacts with HSPA1A; the interaction enhances NOD2 stability. Interacts (via both CARD domains) with HSP90; the interaction enhances NOD2 stability. Interacts (via CARD domain) with SOCS3; the interaction promotes NOD2 degradation. Interacts (via CARD domain) with ERBIN; the interaction inhibits activation of NOD2. Interacts with MAPKBP1; the interaction is enhanced in the presence of muramyl dipeptide (MDP) and inhibits NOD2 homooligomerization and activation. Interacts with INAVA; the interaction takes place upon Pattern recognition receptor (PRR) stimulation. Interacts (via NACHT domain) with CARD9. Interacts (via CARD domain) with CASP1; this interaction leads to IL1B processing. Also interacts with CASP4. Interacts with NLRP1; this interaction is enhanced in the presence of muramyl dipeptide (MDP) and leads to increased IL1B release. Interacts with NLRP12; this interaction promotes degradation of NOD2 through the ubiquitin-proteasome pathway. Interacts with ANKHD1, C10orf67, CHMP5, DOCK7, ENTR1, KRT15, LDOC1, PPP1R12C, PPP2R3B, TRIM41 and VIM. Interacts with MAVS; interaction takes place following single-stranded RNA (ssRNA)-binding. Interacts with ATG16L1. Interacts with Irgm1; promoting Irgm1 'Lys-63'-linked polyubiquitination, which is required for interactions with the core autophagy factors. Palmitoylated by ZDHHC5; palmitoylation is required for proper recruitment to the bacterial entry site and hence for proper signaling upon cognate peptidoglycan detection. Palmitoylation promotes localization to the cell membrane. Palmitoylation protects from SQSTM1/p62-dependent autophagic degradation. Post-translationally, polyubiquitinated by TRIM27, leading to proteasome-mediated degradation. Polyubiquitinated and degraded following muramyl dipeptide (MDP) stimulation, conferring MDP tolerance and preventing septic shock. In terms of processing, degraded via selective autophagy following interaction with Irgm1. Irgm1 promotes NOD2-RIPK2 RIPosome recruitment to autophagosome membranes, promoting their SQSTM1/p62-dependent autophagic degradation. O-glycosylated by OGT, O-GlcNAcylation increases protein stability. In terms of tissue distribution, expressed in monocytes, macrophages, dendritic cells, hepatocytes, preadipocytes, epithelial cells of oral cavity, lung and intestine. In intestine, highly expressed in ileal Paneth cells of the crypt and in intestinal stem cells. Also expressed in neurons of several brain regions including the hypothalamus.

Its subcellular location is the cell membrane. The protein localises to the basolateral cell membrane. It localises to the cytoplasm. The protein resides in the mitochondrion. Its activity is regulated as follows. ADP-binding promotes an inactive closed conformation. In terms of biological role, pattern recognition receptor (PRR) that detects bacterial peptidoglycan fragments and other danger signals and plays an important role in gastrointestinal immunity. Specifically activated by muramyl dipeptide (MDP), a fragment of bacterial peptidoglycan found in every bacterial peptidoglycan type. NOD2 specifically recognizes and binds 6-O-phospho-MDP, the phosphorylated form of MDP, which is generated by NAGK. 6-O-phospho-MDP-binding triggers oligomerization that facilitates the binding and subsequent activation of the proximal adapter receptor-interacting RIPK2. Following recruitment, RIPK2 undergoes 'Met-1'- (linear) and 'Lys-63'-linked polyubiquitination by E3 ubiquitin-protein ligases XIAP, BIRC2, BIRC3 and the LUBAC complex, becoming a scaffolding protein for downstream effectors, triggering activation of the NF-kappa-B and MAP kinases signaling. This in turn leads to the transcriptional activation of hundreds of genes involved in immune response. Its ability to detect bacterial MDP plays a central role in maintaining the equilibrium between intestinal microbiota and host immune responses to control inflammation. An imbalance in this relationship results in dysbiosis, whereby pathogenic bacteria prevail on commensals, causing damage in the intestinal epithelial barrier as well as allowing bacterial invasion and inflammation. Acts as a regulator of appetite by sensing MDP in a subset of brain neurons: microbiota-derived MDP reach the brain, where they bind and activate NOD2 in inhibitory hypothalamic neurons, decreasing neuronal activity, thereby regulating satiety and body temperature. NOD2-dependent MDP-sensing of bacterial cell walls in the intestinal epithelial compartment contributes to sustained postnatal growth upon undernutrition. Also plays a role in antiviral response by acting as a sensor of single-stranded RNA (ssRNA) from viruses: upon ssRNA-binding, interacts with MAVS, leading to activation of interferon regulatory factor-3/IRF3 and expression of type I interferon. Also acts as a regulator of autophagy in dendritic cells via its interaction with ATG16L1, possibly by recruiting ATG16L1 at the site of bacterial entry. NOD2 activation in the small intestine crypt also contributes to intestinal stem cells survival and function: acts by promoting mitophagy via its association with ATG16L1. In addition to its main role in innate immunity, also regulates the adaptive immune system by acting as regulator of helper T-cell and regulatory T-cells (Tregs). Besides recognizing pathogens, also involved in the endoplasmic reticulum stress response: acts by sensing and binding to the cytosolic metabolite sphingosine-1-phosphate generated in response to endoplasmic reticulum stress, initiating an inflammation process that leads to activation of the NF-kappa-B and MAP kinases signaling. May also be involved in NLRP1 activation following activation by MDP, leading to CASP1 activation and IL1B release in macrophages. The polypeptide is Nucleotide-binding oligomerization domain-containing protein 2 (Mus musculus (Mouse)).